The following is a 580-amino-acid chain: Pescadillo homolog (580 aa).

Over residues 291 to 303 (EPEEENEVDEFPA) the composition is skewed to acidic residues. Residues 291–321 (EPEEENEVDEFPADPENAGQEEEQKKQLQEE) are disordered. Over residues 312 to 321 (EEQKKQLQEE) the composition is skewed to basic and acidic residues. The 94-residue stretch at 323–416 (KHKSMFVGLK…MLLPVEDYFP (94 aa)) folds into the BRCT domain. Residues 448-496 (KGENPEDDDDDDEEDDEDEEEDDEDEDDEENEEEEEDKKLRHLENKKVG) form a disordered region. Positions 452–483 (PEDDDDDDEEDDEDEEEDDEDEDDEENEEEEE) are enriched in acidic residues. The segment covering 484–494 (DKKLRHLENKK) has biased composition (basic and acidic residues).

Belongs to the pescadillo family. Component of the PeBoW complex, composed of bop1, pes1 and wdr12. The complex is held together by bop1, which interacts with pes1 via its N-terminal domain and with wdr12 via a high-affinity interaction between the seven-bladed beta-propeller domains of the 2 proteins. The PeBoW complex associates with the 66S pre-ribosome.

The protein localises to the nucleus. The protein resides in the nucleolus. It localises to the nucleoplasm. Its function is as follows. Component of the PeBoW complex, which is required for maturation of 28S and 5.8S ribosomal RNAs and formation of the 60S ribosome. The chain is Pescadillo homolog (pes1) from Xenopus tropicalis (Western clawed frog).